We begin with the raw amino-acid sequence, 620 residues long: Translation initiation factor IF-2 (620 aa).

The tr-type G domain maps to Glu-119–Leu-288. Positions Gly-128–Thr-135 are G1. Gly-128–Thr-135 lines the GTP pocket. The segment at Gly-153–Ala-157 is G2. Residues Asp-175 to Gly-178 are G3. GTP is bound by residues Asp-175–His-179 and Asn-229–Asp-232. The interval Asn-229 to Asp-232 is G4. Residues Ser-265 to Ile-267 form a G5 region.

This sequence belongs to the TRAFAC class translation factor GTPase superfamily. Classic translation factor GTPase family. IF-2 subfamily.

Its subcellular location is the cytoplasm. One of the essential components for the initiation of protein synthesis. Protects formylmethionyl-tRNA from spontaneous hydrolysis and promotes its binding to the 30S ribosomal subunits. Also involved in the hydrolysis of GTP during the formation of the 70S ribosomal complex. This chain is Translation initiation factor IF-2, found in Mycoplasma capricolum subsp. capricolum (strain California kid / ATCC 27343 / NCTC 10154).